We begin with the raw amino-acid sequence, 232 residues long: Phosphatidylserine decarboxylase proenzyme (232 aa).

Catalysis depends on Ser-190, which acts as the Schiff-base intermediate with substrate; via pyruvic acid. Position 190 is a pyruvic acid (Ser); by autocatalysis (Ser-190).

The protein belongs to the phosphatidylserine decarboxylase family. PSD-A subfamily. In terms of assembly, heterodimer of a large membrane-associated beta subunit and a small pyruvoyl-containing alpha subunit. It depends on pyruvate as a cofactor. In terms of processing, is synthesized initially as an inactive proenzyme. Formation of the active enzyme involves a self-maturation process in which the active site pyruvoyl group is generated from an internal serine residue via an autocatalytic post-translational modification. Two non-identical subunits are generated from the proenzyme in this reaction, and the pyruvate is formed at the N-terminus of the alpha chain, which is derived from the carboxyl end of the proenzyme. The post-translation cleavage follows an unusual pathway, termed non-hydrolytic serinolysis, in which the side chain hydroxyl group of the serine supplies its oxygen atom to form the C-terminus of the beta chain, while the remainder of the serine residue undergoes an oxidative deamination to produce ammonia and the pyruvoyl prosthetic group on the alpha chain.

Its subcellular location is the cell membrane. The catalysed reaction is a 1,2-diacyl-sn-glycero-3-phospho-L-serine + H(+) = a 1,2-diacyl-sn-glycero-3-phosphoethanolamine + CO2. It participates in phospholipid metabolism; phosphatidylethanolamine biosynthesis; phosphatidylethanolamine from CDP-diacylglycerol: step 2/2. Functionally, catalyzes the formation of phosphatidylethanolamine (PtdEtn) from phosphatidylserine (PtdSer). This Rhodopseudomonas palustris (strain TIE-1) protein is Phosphatidylserine decarboxylase proenzyme.